Reading from the N-terminus, the 530-residue chain is Tryptophan 7-halogenase RebH (530 aa).

The FAD site is built by Gly-13, Thr-15, Ala-16, Ala-39, Asp-41, Glu-49, and Ala-50. Lys-79 is a catalytic residue. The FAD site is built by Val-197 and Thr-348. Glu-357 serves as a coordination point for L-tryptophan. Residues Thr-359 and Gly-360 each coordinate chloride. Position 361 (Ile-361) interacts with FAD. L-tryptophan is bound by residues Tyr-454, Tyr-455, Glu-461, and Phe-465.

Belongs to the flavin-dependent halogenase family. Bacterial tryptophan halogenase subfamily. Homodimer.

The enzyme catalyses L-tryptophan + FADH2 + chloride + O2 = 7-chloro-L-tryptophan + FAD + 2 H2O. In terms of biological role, involved in the biosynthesis of the indolocarbazole antitumor agent rebeccamycin. Catalyzes the chlorination of tryptophan (Trp) at C7 position to yield 7-chlorotryptophan. It is also able to use bromide ions to generate monobrominated Trp. The protein is Tryptophan 7-halogenase RebH (rebH) of Lentzea aerocolonigenes (Lechevalieria aerocolonigenes).